A 114-amino-acid chain; its full sequence is uncharacterized protein (114 aa).

This is an uncharacterized protein from Mycobacterium bovis (strain ATCC BAA-935 / AF2122/97).